The following is a 220-amino-acid chain: UPF0758 protein APL_1970 (220 aa).

Residues 98–220 (NINEPYLAVM…YFSFEEEKFR (123 aa)) form the MPN domain. Positions 169, 171, and 182 each coordinate Zn(2+). The JAMM motif motif lies at 169–182 (HNHPSGNCTPSESD).

The protein belongs to the UPF0758 family.

The sequence is that of UPF0758 protein APL_1970 from Actinobacillus pleuropneumoniae serotype 5b (strain L20).